The sequence spans 651 residues: Carboxypeptidase S1 homolog A (651 aa).

An N-terminal signal peptide occupies residues 1-19 (MHLATGLAVALPFIGAASA). A disulfide bridge connects residues C50 and C121. Residues N77, N125, N128, N161, N184, and N202 are each glycosylated (N-linked (GlcNAc...) asparagine). The active site involves S238. Residues N260, N299, N308, N347, and N410 are each glycosylated (N-linked (GlcNAc...) asparagine). 2 disulfides stabilise this stretch: C325–C361 and C332–C354. D458 is a catalytic residue. C461 is a substrate binding site. 2 N-linked (GlcNAc...) asparagine glycosylation sites follow: N474 and N504. Residue H515 is part of the active site. E516 provides a ligand contact to substrate. A disordered region spans residues 604–630 (KSPAGKKQGPPPTSTSPPSPTSSSEGS). Residues 612-623 (GPPPTSTSPPSP) show a composition bias toward pro residues. A lipid anchor (GPI-anchor amidated serine) is attached at S625. Residues 626–651 (SSEGSVKEFSVSVLGVSVLAAITFFL) constitute a propeptide, removed in mature form.

The protein belongs to the peptidase S10 family.

The protein localises to the cell membrane. It carries out the reaction Preferential release of a C-terminal arginine or lysine residue.. Its function is as follows. Extracellular serine carboxypeptidase that contributes to pathogenicity. The polypeptide is Carboxypeptidase S1 homolog A (SCPA) (Arthroderma otae (strain ATCC MYA-4605 / CBS 113480) (Microsporum canis)).